We begin with the raw amino-acid sequence, 243 residues long: Juxtaposed with another zinc finger protein 1 (243 aa).

The C2H2-type 1 zinc-finger motif lies at 12-37; it reads NTCRFGGCGLHFPTLADLIEHIEDNH. The interval 39-79 is required for interaction with NR2C2; that stretch reads DTDPRVLEKQELQQPTYVALSYINRFMTDAARREQESLKKK. The segment covering 89–108 has biased composition (polar residues); it reads SSSVSRGNVSTPPRHSSGSL. Residues 89–151 are disordered; the sequence is SSSVSRGNVS…SDSDESWTTE (63 aa). Phosphothreonine is present on residues T109 and T113. A compositionally biased stretch (low complexity) spans 118–130; the sequence is PSSSFRSSTPTGS. Positions 131-148 are enriched in acidic residues; it reads EYDEEEVDYEESDSDESW. Residues 173-198 form a C2H2-type 2 zinc finger; sequence FACPVPGCKKRYKNVNGIKYHAKNGH. A C2H2-type 3; degenerate zinc finger spans residues 208 to 230; it reads FKCRCGKSYKTAQGLRHHTINFH.

Interacts with NR2C2 (via ligand-binding region). In terms of tissue distribution, expressed in range of tissues with highest expression levels in testis, liver, muscle and fat and lowest levels in kidney. Detected in liver and white adipose tissue (at protein level).

It localises to the nucleus. Acts as a transcriptional corepressor of orphan nuclear receptor NR2C2. Inhibits expression of the gluconeogenesis enzyme PCK2 through inhibition of NR2C2 activity. Also involved in transcriptional activation of NAMPT by promoting expression of PPARA and PPARD. Plays a role in lipid metabolism by suppressing lipogenesis, increasing lipolysis and decreasing lipid accumulation in adipose tissue. Plays a role in glucose homeostasis by improving glucose metabolism and insulin sensitivity. The protein is Juxtaposed with another zinc finger protein 1 (Jazf1) of Mus musculus (Mouse).